Reading from the N-terminus, the 210-residue chain is Homeobox protein Rhox5 (210 aa).

Positions 29–117 (KAEAFLQAGE…KNGKPEDRQM (89 aa)) are disordered. The homeobox; atypical DNA-binding region spans 117–175 (MPLQGSRFAQQRLSELQSILQRTNSFDVPREDLYRLMDTCVARVQNWFKIRRAAARRNR).

It is found in the nucleus. Transcription factor required for differentiation of embryonic stem cells (ESCs) into primordial germ cells. This chain is Homeobox protein Rhox5 (Rhox5), found in Mus minutoides (Southern African pygmy mouse).